Reading from the N-terminus, the 322-residue chain is MFEIHPVKKVSVVIPVYNEQESLPELIRRTTAACESLGKEYEILLIDDGSSDNSAHMLVEASQAEGSHIVSILLNRNYGQHSAIMAGFSHVTGDLIITLDADLQNPPEEIPRLVAKADEGYDVVGTVRQNRQDSWFRKTASKMINRLIQRTTGKAMGDYGCMLRAYRRHIVDAMLHCHERSTFIPILANIFARRAIEIPVHHAEREFGESKYSFMRLINLMYDLVTCLTTTPLRMLSLLGSIIAIGGFSIAVLLVILRLTFGPQWAAEGVFMLFAVLFTFIGAQFIGMGLLGEYIGRIYTDVRARPRYFVQQVIRPSSKENE.

At 1–235 (MFEIHPVKKV…TCLTTTPLRM (235 aa)) the chain is on the cytoplasmic side. A helical membrane pass occupies residues 236–256 (LSLLGSIIAIGGFSIAVLLVI). Residues 257-269 (LRLTFGPQWAAEG) lie on the Periplasmic side of the membrane. A helical membrane pass occupies residues 270-290 (VFMLFAVLFTFIGAQFIGMGL). Residues 291–322 (LGEYIGRIYTDVRARPRYFVQQVIRPSSKENE) lie on the Cytoplasmic side of the membrane.

It belongs to the glycosyltransferase 2 family.

The protein localises to the cell inner membrane. It carries out the reaction UDP-4-deoxy-4-formamido-beta-L-arabinose + di-trans,octa-cis-undecaprenyl phosphate = 4-deoxy-4-formamido-alpha-L-arabinopyranosyl di-trans,octa-cis-undecaprenyl phosphate + UDP. It functions in the pathway glycolipid biosynthesis; 4-amino-4-deoxy-alpha-L-arabinose undecaprenyl phosphate biosynthesis; 4-amino-4-deoxy-alpha-L-arabinose undecaprenyl phosphate from UDP-4-deoxy-4-formamido-beta-L-arabinose and undecaprenyl phosphate: step 1/2. Its pathway is bacterial outer membrane biogenesis; lipopolysaccharide biosynthesis. Catalyzes the transfer of 4-deoxy-4-formamido-L-arabinose from UDP to undecaprenyl phosphate. The modified arabinose is attached to lipid A and is required for resistance to polymyxin and cationic antimicrobial peptides. The chain is Undecaprenyl-phosphate 4-deoxy-4-formamido-L-arabinose transferase from Escherichia coli O45:K1 (strain S88 / ExPEC).